The primary structure comprises 418 residues: Torsin-4A-B (418 aa).

A helical membrane pass occupies residues 128-144 (CLLLFVGIVCFQIFNAI). An ATP-binding site is contributed by 200–207 (GPSGVGKS).

The protein belongs to the ClpA/ClpB family. Torsin subfamily.

The protein resides in the membrane. The chain is Torsin-4A-B (tor4a-b) from Xenopus laevis (African clawed frog).